Consider the following 458-residue polypeptide: Pentatricopeptide repeat-containing protein At1g77405 (458 aa).

7 PPR repeats span residues 164 to 198 (TTAS…HCKP), 199 to 233 (DVYA…GFRY), 236 to 271 (DTYT…NRMF), 282 to 316 (DVVT…GCVP), 317 to 351 (NQVT…GHGV), 353 to 387 (GSST…GLVP), and 388 to 419 (REYT…MREG).

Belongs to the PPR family. P subfamily.

This Arabidopsis thaliana (Mouse-ear cress) protein is Pentatricopeptide repeat-containing protein At1g77405.